The sequence spans 287 residues: MAIRTFRPYTPGTRTRVVTDFNELTGRKPERSLVVSKHRLKGRNNRGVITCRHRGGGHKRLYRIVDFRRNKHDVPAKVAAIHYDPHRNARLALLFYSDGEKRYILAPAGIAIGQEVISGPKVPIETGNAMPLSAIPLGSSVHCVELYAGRGGQMVRSAGASAQVMAKEGDYVALRLPSTEVRLIRRECYATLGEVGNSEIRNTSLGKAGRRRWLGRRPQVRGSVMNPCDHPHGGGEGRAPVGRAGPVTPWGKPALGLKTRKRNKPSNRFVLRKRRRVSKRSRGGRDS.

Residues 221 to 287 are disordered; it reads RGSVMNPCDH…SKRSRGGRDS (67 aa). A compositionally biased stretch (basic residues) spans 258–287; the sequence is KTRKRNKPSNRFVLRKRRRVSKRSRGGRDS.

Belongs to the universal ribosomal protein uL2 family. As to quaternary structure, part of the 50S ribosomal subunit. Forms a bridge to the 30S subunit in the 70S ribosome.

One of the primary rRNA binding proteins. Required for association of the 30S and 50S subunits to form the 70S ribosome, for tRNA binding and peptide bond formation. It has been suggested to have peptidyltransferase activity; this is somewhat controversial. Makes several contacts with the 16S rRNA in the 70S ribosome. This Prochlorococcus marinus (strain MIT 9211) protein is Large ribosomal subunit protein uL2.